The chain runs to 353 residues: Heterogeneous nuclear ribonucleoproteins A2/B1 (353 aa).

M1 carries the post-translational modification N-acetylmethionine. T4 carries the phosphothreonine modification. Residues 9–15 (PLERKKR) carry the Nuclear localization signal motif. RRM domains are found at residues 21-104 (RKLF…ESGK) and 112-191 (KKLF…LSRQ). K22 participates in a covalent cross-link: Glycyl lysine isopeptide (Lys-Gly) (interchain with G-Cter in SUMO2). Residue S29 is modified to Phosphoserine. R38 carries the post-translational modification Omega-N-methylarginine. S85 is subject to Phosphoserine. An N6,N6-dimethyllysine; alternate modification is found at K104. A Glycyl lysine isopeptide (Lys-Gly) (interchain with G-Cter in SUMO2); alternate cross-link involves residue K104. Residues K112, K120, and K137 each participate in a glycyl lysine isopeptide (Lys-Gly) (interchain with G-Cter in SUMO2) cross-link. Phosphothreonine is present on T140. S149 carries the phosphoserine modification. A Glycyl lysine isopeptide (Lys-Gly) (interchain with G-Cter in SUMO2) cross-link involves residue K152. T159 carries the post-translational modification Phosphothreonine. Residues K168 and K173 each participate in a glycyl lysine isopeptide (Lys-Gly) (interchain with G-Cter in SUMO2); alternate cross-link. Residues K168 and K173 each carry the N6-acetyllysine; alternate modification. Position 176 is a phosphothreonine (T176). K186 participates in a covalent cross-link: Glycyl lysine isopeptide (Lys-Gly) (interchain with G-Cter in SUMO2). A phosphoserine mark is found at S189 and S201. Positions 193-353 (MQEVQSSRSG…SGGYGGRSRY (161 aa)) are disordered. A compositionally biased stretch (gly residues) spans 202 to 223 (GRGGNFGFGDSRGGGGNFGPGP). Asymmetric dimethylarginine; alternate is present on R203. R203 carries the post-translational modification Dimethylated arginine; alternate. At R203 the chain carries Omega-N-methylarginine; alternate. S212 is modified (phosphoserine). At R213 the chain carries Asymmetric dimethylarginine; alternate. R213 is modified (dimethylated arginine; alternate). Omega-N-methylarginine; alternate is present on R213. S225 carries the phosphoserine modification. R228 carries the omega-N-methylarginine modification. S231 and S236 each carry phosphoserine. An Omega-N-methylarginine modification is found at R238. The residue at position 259 (S259) is a Phosphoserine. Position 266 is an asymmetric dimethylarginine; alternate (R266). R266 is subject to Omega-N-methylarginine; alternate. The nuclear targeting sequence stretch occupies residues 308–347 (QQPSNYGPMKSGNFGGSRNMGGPYGGGNYGPGGSGGSGGY). The segment covering 320-353 (NFGGSRNMGGPYGGGNYGPGGSGGSGGYGGRSRY) has biased composition (gly residues). The residue at position 324 (S324) is a Phosphoserine. An Omega-N-methylarginine modification is found at R325. Y331 is modified (phosphotyrosine). Phosphoserine is present on residues S341 and S344. Residue Y347 is modified to Phosphotyrosine. R350 carries the post-translational modification Omega-N-methylarginine.

As to quaternary structure, identified in the spliceosome C complex. Identified in a IGF2BP1-dependent mRNP granule complex containing untranslated mRNAs. Interacts with IGF2BP1. Interacts with C9orf72. Interacts with DGCR8. Interacts with TARDBP. Interacts with CKAP5. Interacts with PPIA/CYPA. Interacts (via C-terminus) with FAM76B; the interaction results in retention of HNRNPA2B1 in the nucleus and inhibition of the NF-kappa-B-mediated inflammatory pathway. Interacts with NF-kappa-B inhibitors NFKBIA and NFKBIE; the interaction may be mediated by the RRM2 domain of HNRNPA2B1, and HNRNPA2B1 may interact simultaneously with FAM76B and either NFKBIA or NFKBIE to form a complex. Sumoylated in exosomes, promoting miRNAs-binding. Post-translationally, asymmetric dimethylation at Arg-266 constitutes the major methylation site. According to a report, methylation affects subcellular location and promotes nuclear localization. According to another report, methylation at Arg-266 does not influence nucleocytoplasmic shuttling.

It is found in the nucleus. The protein resides in the nucleoplasm. Its subcellular location is the cytoplasmic granule. It localises to the secreted. The protein localises to the extracellular exosome. In terms of biological role, heterogeneous nuclear ribonucleoprotein (hnRNP) that associates with nascent pre-mRNAs, packaging them into hnRNP particles. The hnRNP particle arrangement on nascent hnRNA is non-random and sequence-dependent and serves to condense and stabilize the transcripts and minimize tangling and knotting. Packaging plays a role in various processes such as transcription, pre-mRNA processing, RNA nuclear export, subcellular location, mRNA translation and stability of mature mRNAs. Forms hnRNP particles with at least 20 other different hnRNP and heterogeneous nuclear RNA in the nucleus. Involved in transport of specific mRNAs to the cytoplasm in oligodendrocytes and neurons: acts by specifically recognizing and binding the A2RE (21 nucleotide hnRNP A2 response element) or the A2RE11 (derivative 11 nucleotide oligonucleotide) sequence motifs present on some mRNAs, and promotes their transport to the cytoplasm. Specifically binds single-stranded telomeric DNA sequences, protecting telomeric DNA repeat against endonuclease digestion. Also binds other RNA molecules, such as primary miRNA (pri-miRNAs): acts as a nuclear 'reader' of the N6-methyladenosine (m6A) mark by specifically recognizing and binding a subset of nuclear m6A-containing pri-miRNAs. Binding to m6A-containing pri-miRNAs promotes pri-miRNA processing by enhancing binding of DGCR8 to pri-miRNA transcripts. Involved in miRNA sorting into exosomes following sumoylation, possibly by binding (m6A)-containing pre-miRNAs. Acts as a regulator of efficiency of mRNA splicing, possibly by binding to m6A-containing pre-mRNAs. Plays a role in the splicing of pyruvate kinase PKM by binding repressively to sequences flanking PKM exon 9, inhibiting exon 9 inclusion and resulting in exon 10 inclusion and production of the PKM M2 isoform. The chain is Heterogeneous nuclear ribonucleoproteins A2/B1 (HNRNPA2B1) from Pongo abelii (Sumatran orangutan).